Here is a 363-residue protein sequence, read N- to C-terminus: Probable aminomethyltransferase (363 aa).

Belongs to the GcvT family. As to quaternary structure, the glycine cleavage system is composed of four proteins: P, T, L and H.

The catalysed reaction is N(6)-[(R)-S(8)-aminomethyldihydrolipoyl]-L-lysyl-[protein] + (6S)-5,6,7,8-tetrahydrofolate = N(6)-[(R)-dihydrolipoyl]-L-lysyl-[protein] + (6R)-5,10-methylene-5,6,7,8-tetrahydrofolate + NH4(+). Its function is as follows. The glycine cleavage system catalyzes the degradation of glycine. This is Probable aminomethyltransferase from Halobacterium salinarum (strain ATCC 29341 / DSM 671 / R1).